We begin with the raw amino-acid sequence, 416 residues long: Serine hydroxymethyltransferase (416 aa).

(6S)-5,6,7,8-tetrahydrofolate contacts are provided by residues Leu-121 and 125–127 (GHL). Lys-229 is modified (N6-(pyridoxal phosphate)lysine).

This sequence belongs to the SHMT family. In terms of assembly, homodimer. Pyridoxal 5'-phosphate serves as cofactor.

Its subcellular location is the cytoplasm. The catalysed reaction is (6R)-5,10-methylene-5,6,7,8-tetrahydrofolate + glycine + H2O = (6S)-5,6,7,8-tetrahydrofolate + L-serine. It functions in the pathway one-carbon metabolism; tetrahydrofolate interconversion. The protein operates within amino-acid biosynthesis; glycine biosynthesis; glycine from L-serine: step 1/1. Functionally, catalyzes the reversible interconversion of serine and glycine with tetrahydrofolate (THF) serving as the one-carbon carrier. This reaction serves as the major source of one-carbon groups required for the biosynthesis of purines, thymidylate, methionine, and other important biomolecules. Also exhibits THF-independent aldolase activity toward beta-hydroxyamino acids, producing glycine and aldehydes, via a retro-aldol mechanism. This chain is Serine hydroxymethyltransferase, found in Neisseria gonorrhoeae (strain NCCP11945).